The chain runs to 93 residues: Small ribosomal subunit protein uS19 (93 aa).

The protein belongs to the universal ribosomal protein uS19 family.

Its function is as follows. Protein S19 forms a complex with S13 that binds strongly to the 16S ribosomal RNA. The protein is Small ribosomal subunit protein uS19 of Ehrlichia chaffeensis (strain ATCC CRL-10679 / Arkansas).